The primary structure comprises 246 residues: E3 ubiquitin-protein ligase LubX (246 aa).

2 U-box domains span residues 36-109 and 131-204; these read TTPT…QTNY and EIPD…RKRE.

Interacts with host CLK1. Post-translationally, ubiquitinated in the presence of host E1 ubiquitin-activating enzyme, E2 ubiquitin-conjugating enzyme (UBE2D1 or UBE2D3) and ubiquitin.

It is found in the secreted. The protein resides in the host cell. The catalysed reaction is S-ubiquitinyl-[E2 ubiquitin-conjugating enzyme]-L-cysteine + [acceptor protein]-L-lysine = [E2 ubiquitin-conjugating enzyme]-L-cysteine + N(6)-ubiquitinyl-[acceptor protein]-L-lysine.. In terms of biological role, effector proteins function to alter host cell physiology and promote bacterial survival in host tissues. This protein is an E3 ubiquitin ligase that interferes with host's ubiquitination pathway. Acts in conjunction with host E2 ubiquitin-conjugating enzymes UBE2D1 (UBCH5A) or UBE2D3 (UBCH5C), and mediates polyubiquitination of host kinase CLK1. The chain is E3 ubiquitin-protein ligase LubX (lubX) from Legionella pneumophila subsp. pneumophila (strain Philadelphia 1 / ATCC 33152 / DSM 7513).